The chain runs to 577 residues: Aspartate--tRNA ligase (577 aa).

Residue E171 participates in L-aspartate binding. Residues 195-198 are aspartate; the sequence is QLFK. Residue R217 coordinates L-aspartate. ATP is bound by residues 217–219 and Q226; that span reads RDE. Residue H437 participates in L-aspartate binding. Position 472 (E472) interacts with ATP. L-aspartate is bound at residue R479. 524–527 contacts ATP; sequence GFDR.

Belongs to the class-II aminoacyl-tRNA synthetase family. Type 1 subfamily. Homodimer.

Its subcellular location is the cytoplasm. It catalyses the reaction tRNA(Asp) + L-aspartate + ATP = L-aspartyl-tRNA(Asp) + AMP + diphosphate. In terms of biological role, catalyzes the attachment of L-aspartate to tRNA(Asp) in a two-step reaction: L-aspartate is first activated by ATP to form Asp-AMP and then transferred to the acceptor end of tRNA(Asp). In Deinococcus geothermalis (strain DSM 11300 / CIP 105573 / AG-3a), this protein is Aspartate--tRNA ligase.